The following is a 68-amino-acid chain: Amphipathic peptide CT1 (68 aa).

The N-terminal stretch at 1–23 (MKTQIVILIVAVLFLQLVSQSDA) is a signal peptide. Position 36 is a leucine amide (leucine 36). Residues 40–68 (GLKNLDQYNDLFDGEISDADIKFLKDLMR) constitute a propeptide that is removed on maturation.

This sequence belongs to the non-disulfide-bridged peptide (NDBP) superfamily. Short antimicrobial peptide (group 4) family. Expressed by the venom gland.

Its subcellular location is the secreted. It is found in the target cell membrane. Amphipathic peptide that shows no antibacterial activity even at 50 uM but shows a low hemolytic activity against human erythrocytes. The polypeptide is Amphipathic peptide CT1 (Mesomexovis subcristatus (Scorpion)).